A 422-amino-acid polypeptide reads, in one-letter code: Elongation factor 1-alpha (422 aa).

A tr-type G domain is found at 5-221 (KPHMNLAVIG…NSLKEPEKPS (217 aa)). Positions 14-21 (GHIDHGKS) are G1. 14-21 (GHIDHGKS) provides a ligand contact to GTP. A Mg(2+)-binding site is contributed by S21. The G2 stretch occupies residues 70–74 (GITID). Residues 91–94 (DCPG) are G3. GTP-binding positions include 91–95 (DCPGH) and 146–149 (NKMD). The G4 stretch occupies residues 146–149 (NKMD). The segment at 185–187 (SAF) is G5.

The protein belongs to the TRAFAC class translation factor GTPase superfamily. Classic translation factor GTPase family. EF-Tu/EF-1A subfamily.

It localises to the cytoplasm. It catalyses the reaction GTP + H2O = GDP + phosphate + H(+). Functionally, GTP hydrolase that promotes the GTP-dependent binding of aminoacyl-tRNA to the A-site of ribosomes during protein biosynthesis. The protein is Elongation factor 1-alpha of Methanosarcina mazei (strain ATCC BAA-159 / DSM 3647 / Goe1 / Go1 / JCM 11833 / OCM 88) (Methanosarcina frisia).